The primary structure comprises 437 residues: tRNA wybutosine-synthesizing protein 2 homolog (437 aa).

S-adenosyl-L-methionine contacts are provided by residues S208, K215, E255, and 283 to 284 (DN). Residues 331 to 344 (SFSGKNPQPPGSSN) are compositionally biased toward polar residues. The tract at residues 331–374 (SFSGKNPQPPGSSNMEKKHWPHPQKITTDKQGNRTTGSCMGEMS) is disordered.

Belongs to the class I-like SAM-binding methyltransferase superfamily. TRM5/TYW2 family.

The catalysed reaction is 4-demethylwyosine(37) in tRNA(Phe) + S-adenosyl-L-methionine = 4-demethyl-7-[(3S)-3-amino-3-carboxypropyl]wyosine(37) in tRNA(Phe) + S-methyl-5'-thioadenosine + H(+). It functions in the pathway tRNA modification; wybutosine-tRNA(Phe) biosynthesis. S-adenosyl-L-methionine-dependent transferase that acts as a component of the wybutosine biosynthesis pathway. Wybutosine is a hyper modified guanosine with a tricyclic base found at the 3'-position adjacent to the anticodon of eukaryotic phenylalanine tRNA. Catalyzes the transfer of the alpha-amino-alpha-carboxypropyl (acp) group from S-adenosyl-L-methionine to the C-7 position of 4-demethylwyosine (imG-14) to produce wybutosine-86. This chain is tRNA wybutosine-synthesizing protein 2 homolog (Trmt12), found in Rattus norvegicus (Rat).